Here is a 200-residue protein sequence, read N- to C-terminus: MTSFLIASNILLWLAFLGVTVVMLGLMRQVGLLHERSSPMGAMITDHGPDIGDAAPEFELPDFFGRPVRIGGAEAQGRQTLLMFTAPSCPVCDKLFPIIKSIGRAEGINVVMISDGAPEEHRRFLDSHELGEMRYVVSAEAGMAFQVGKIPYGVLLDGQGIIRAKGLTNTREHLESLLEADRTGFASLQQYMASRKKQAA.

Residues 4 to 24 (FLIASNILLWLAFLGVTVVML) traverse the membrane as a helical segment. In terms of domain architecture, Thioredoxin spans 49-183 (PDIGDAAPEF…LESLLEADRT (135 aa)).

The protein resides in the membrane. It functions in the pathway one-carbon metabolism; methylamine degradation. In terms of biological role, may be specifically involved in the processing, transport, and/or maturation of the MADH beta-subunit. This Paracoccus denitrificans protein is Methylamine utilization protein MauD (mauD).